Reading from the N-terminus, the 82-residue chain is Endocuticle structural glycoprotein SgAbd-5 (82 aa).

Q1 carries the pyrrolidone carboxylic acid modification. The 65-residue stretch at 18–82 (LGQYNFAYRT…ENGYQPRVQS (65 aa)) folds into the Chitin-binding type R&amp;R domain.

Its function is as follows. Component of the soft endocuticle of desert locust. The chain is Endocuticle structural glycoprotein SgAbd-5 from Schistocerca gregaria (Desert locust).